The following is a 433-amino-acid chain: Glutamate-1-semialdehyde 2,1-aminomutase (433 aa).

Lys-271 is subject to N6-(pyridoxal phosphate)lysine.

The protein belongs to the class-III pyridoxal-phosphate-dependent aminotransferase family. HemL subfamily. Homodimer. Requires pyridoxal 5'-phosphate as cofactor.

It localises to the cytoplasm. The enzyme catalyses (S)-4-amino-5-oxopentanoate = 5-aminolevulinate. It participates in porphyrin-containing compound metabolism; protoporphyrin-IX biosynthesis; 5-aminolevulinate from L-glutamyl-tRNA(Glu): step 2/2. Its pathway is porphyrin-containing compound metabolism; chlorophyll biosynthesis. The protein is Glutamate-1-semialdehyde 2,1-aminomutase of Prochlorococcus marinus (strain SARG / CCMP1375 / SS120).